A 309-amino-acid chain; its full sequence is Homoserine O-acetyltransferase (309 aa).

C148 serves as the catalytic Acyl-thioester intermediate. K169 and S198 together coordinate substrate. Catalysis depends on H241, which acts as the Proton acceptor. E243 is a catalytic residue. A substrate-binding site is contributed by R255.

It belongs to the MetA family.

It is found in the cytoplasm. The catalysed reaction is L-homoserine + acetyl-CoA = O-acetyl-L-homoserine + CoA. The protein operates within amino-acid biosynthesis; L-methionine biosynthesis via de novo pathway; O-acetyl-L-homoserine from L-homoserine: step 1/1. Its function is as follows. Transfers an acetyl group from acetyl-CoA to L-homoserine, forming acetyl-L-homoserine. In vitro, can also use propionyl-CoA as acyl donor. This chain is Homoserine O-acetyltransferase, found in Shouchella clausii (Alkalihalobacillus clausii).